Here is a 355-residue protein sequence, read N- to C-terminus: Uroporphyrinogen decarboxylase (355 aa).

Substrate contacts are provided by residues 36–40 (RQAGR), aspartate 85, tyrosine 160, serine 215, and histidine 334.

The protein belongs to the uroporphyrinogen decarboxylase family. Homodimer.

The protein localises to the cytoplasm. The catalysed reaction is uroporphyrinogen III + 4 H(+) = coproporphyrinogen III + 4 CO2. Its pathway is porphyrin-containing compound metabolism; protoporphyrin-IX biosynthesis; coproporphyrinogen-III from 5-aminolevulinate: step 4/4. Catalyzes the decarboxylation of four acetate groups of uroporphyrinogen-III to yield coproporphyrinogen-III. The protein is Uroporphyrinogen decarboxylase of Rhodococcus erythropolis (strain PR4 / NBRC 100887).